An 89-amino-acid chain; its full sequence is Protein S100-A6 (89 aa).

EF-hand domains are found at residues 12-47 (LVAI…IGSK) and 48-83 (LQDA…LALI). Residues Thr28 and Glu33 each coordinate Ca(2+). Lys40 bears the N6-acetyllysine mark. Ser46 carries the phosphoserine modification. Lys47 carries the post-translational modification N6-acetyllysine; alternate. Lys47 carries the N6-succinyllysine; alternate modification. Asp61, Asn63, Asp65, Glu67, and Glu72 together coordinate Ca(2+).

It belongs to the S-100 family. Homodimer; head to tail assembly of 2 subunits. Interacts with CACYBP in a calcium-dependent manner. Interacts with ANXA2 and ANXA11 (via N-terminus). Interacts with SUGT1. Interacts with TP53; has higher affinity for TP53 that is phosphorylated on its N-terminal domain, and lower affinity for TP53 that is phosphorylated on its C-terminal domain. Interacts with tropomyosin. Interacts with FKBP4. Interacts with PPP5C (via TPR repeats); the interaction is calcium-dependent and modulates PPP5C activity. Interacts with TPPP; this interaction inhibits TPPP dimerization.

The protein resides in the nucleus envelope. It localises to the cytoplasm. It is found in the cell membrane. May function as calcium sensor and modulator, contributing to cellular calcium signaling. May function by interacting with other proteins, such as TPR-containing proteins, and indirectly play a role in many physiological processes such as the reorganization of the actin cytoskeleton and in cell motility. Binds 2 calcium ions. Calcium binding is cooperative. This chain is Protein S100-A6 (S100a6), found in Mus musculus (Mouse).